The following is a 380-amino-acid chain: MSKNHEVYKDALPISLAYPLPPIILTNPLTWIPYIYRYLFRKTPRQVQWQCQLHESDLSCVVTDSEAIKKFWTSGFFGKGNLSRSEPTWHTRTKRSLGLLGFDEDLVAEEVTARRRFQRKQFKAQRAYRENRARERQLLLENGKPIPASLEEDAELPEYLTKSLKDFSRVSENPYHITSVPNVEHLQLTFPEAFFLASLGVLRINYENPNFELLPILKLFANIVANSVALTHDYSLQQSHEDPIIEPDNKFLTELAAYFYFRQQGWVVKNGTKFSVDFLLYKKGPVFSHAEFAILLIPCVGNKQKYNMQWHEVHCLNRVIAQVKKSLILCYVQCPSIEDFNKIWKNQASMNEWDWAESVLRQYLIRCVTLRRWVPSRNRD.

Catalysis depends on residues Y281, H289, and K325.

Belongs to the tRNA-intron endonuclease family. Heterotetramer composed of sen2, sen15, sen34 and sen54. Interacts directly with sen54.

The enzyme catalyses pretRNA = a 3'-half-tRNA molecule with a 5'-OH end + a 5'-half-tRNA molecule with a 2',3'-cyclic phosphate end + an intron with a 2',3'-cyclic phosphate and a 5'-hydroxyl terminus.. Its function is as follows. Constitutes one of the two catalytic subunit of the tRNA-splicing endonuclease complex, a complex responsible for identification and cleavage of the splice sites in pre-tRNA. It cleaves pre-tRNA at the 5'- and 3'-splice sites to release the intron. The products are an intron and two tRNA half-molecules bearing 2',3'-cyclic phosphate and 5'-OH termini. There are no conserved sequences at the splice sites, but the intron is invariably located at the same site in the gene, placing the splice sites an invariant distance from the constant structural features of the tRNA body. This subunit may anchor the endonuclease complex to the nuclear membrane. Probably carries the active site for 5'-splice site cleavage. In Schizosaccharomyces pombe (strain 972 / ATCC 24843) (Fission yeast), this protein is Probable tRNA-splicing endonuclease subunit sen2 (sen2).